A 468-amino-acid polypeptide reads, in one-letter code: Ribosomal protein uS12 methylthiotransferase RimO (468 aa).

The MTTase N-terminal domain occupies 18–129 (PTVAFAHLGC…IVEVLERVEA (112 aa)). Residues Cys27, Cys63, Cys92, Cys167, Cys171, and Cys174 each coordinate [4Fe-4S] cluster. The region spanning 153–382 (TTGEAVAYLK…MTLQQPISAA (230 aa)) is the Radical SAM core domain. The TRAM domain maps to 385–456 (ARWVGRTVDA…IYDLRAEIVG (72 aa)).

Belongs to the methylthiotransferase family. RimO subfamily. [4Fe-4S] cluster serves as cofactor.

Its subcellular location is the cytoplasm. The enzyme catalyses L-aspartate(89)-[ribosomal protein uS12]-hydrogen + (sulfur carrier)-SH + AH2 + 2 S-adenosyl-L-methionine = 3-methylsulfanyl-L-aspartate(89)-[ribosomal protein uS12]-hydrogen + (sulfur carrier)-H + 5'-deoxyadenosine + L-methionine + A + S-adenosyl-L-homocysteine + 2 H(+). Catalyzes the methylthiolation of an aspartic acid residue of ribosomal protein uS12. The protein is Ribosomal protein uS12 methylthiotransferase RimO of Synechococcus sp. (strain WH7803).